A 272-amino-acid chain; its full sequence is Indole-3-glycerol phosphate synthase (272 aa).

It belongs to the TrpC family.

It catalyses the reaction 1-(2-carboxyphenylamino)-1-deoxy-D-ribulose 5-phosphate + H(+) = (1S,2R)-1-C-(indol-3-yl)glycerol 3-phosphate + CO2 + H2O. It participates in amino-acid biosynthesis; L-tryptophan biosynthesis; L-tryptophan from chorismate: step 4/5. In Mycobacterium ulcerans (strain Agy99), this protein is Indole-3-glycerol phosphate synthase.